The following is a 199-amino-acid chain: dITP/XTP pyrophosphatase (199 aa).

12-17 (SGNAGK) lines the substrate pocket. Asp73 functions as the Proton acceptor in the catalytic mechanism. A Mg(2+)-binding site is contributed by Asp73. Substrate contacts are provided by residues Ser74, 157-160 (FGYD), Lys180, and 185-186 (HR).

The protein belongs to the HAM1 NTPase family. As to quaternary structure, homodimer. Mg(2+) serves as cofactor.

The enzyme catalyses XTP + H2O = XMP + diphosphate + H(+). It carries out the reaction dITP + H2O = dIMP + diphosphate + H(+). It catalyses the reaction ITP + H2O = IMP + diphosphate + H(+). Functionally, pyrophosphatase that catalyzes the hydrolysis of nucleoside triphosphates to their monophosphate derivatives, with a high preference for the non-canonical purine nucleotides XTP (xanthosine triphosphate), dITP (deoxyinosine triphosphate) and ITP. Seems to function as a house-cleaning enzyme that removes non-canonical purine nucleotides from the nucleotide pool, thus preventing their incorporation into DNA/RNA and avoiding chromosomal lesions. This Neisseria meningitidis serogroup A / serotype 4A (strain DSM 15465 / Z2491) protein is dITP/XTP pyrophosphatase.